Consider the following 315-residue polypeptide: Probable cell division protein kinase ECU11_1290 (315 aa).

The Protein kinase domain occupies 13–294; it reads YEKVCRISSG…ASQGLCSGFV (282 aa). ATP-binding positions include 19–27 and lysine 42; that span reads ISSGSFGNV. Residue aspartate 138 is the Proton acceptor of the active site.

This sequence belongs to the protein kinase superfamily. CMGC Ser/Thr protein kinase family. CDC2/CDKX subfamily.

The protein localises to the nucleus. It catalyses the reaction L-seryl-[protein] + ATP = O-phospho-L-seryl-[protein] + ADP + H(+). The enzyme catalyses L-threonyl-[protein] + ATP = O-phospho-L-threonyl-[protein] + ADP + H(+). In terms of biological role, may play a role in the control of the eukaryotic cell cycle. The protein is Probable cell division protein kinase ECU11_1290 of Encephalitozoon cuniculi (strain GB-M1) (Microsporidian parasite).